A 152-amino-acid polypeptide reads, in one-letter code: MEVILLEKVGKLGTVGDVVDVKAGFGRNYLLPSGKAITATKASIADFETRRAELEAAAAEKKTSAEGRAKLIDNLGAITIGANAGDEGKLFGSVGARDIANAITAAGVNVTKAEVKLPEGTLREVGEYEIDLQLHVDVTHVVKVVIVADANA.

The protein belongs to the bacterial ribosomal protein bL9 family.

Its function is as follows. Binds to the 23S rRNA. The polypeptide is Large ribosomal subunit protein bL9 (Saccharophagus degradans (strain 2-40 / ATCC 43961 / DSM 17024)).